Here is a 728-residue protein sequence, read N- to C-terminus: Fatty acid oxidation complex subunit alpha (728 aa).

Residues 1 to 189 (MLYQSETIQV…KNGLIDAVVP (189 aa)) are enoyl-CoA hydratase/isomerase. Asp296 contacts substrate. Positions 311-728 (TIPEYAAVLG…TIAVSTGKTA (418 aa)) are 3-hydroxyacyl-CoA dehydrogenase. Residues Met324, Asp343, 400–402 (VVE), Lys407, and Ser429 contribute to the NAD(+) site. The active-site For 3-hydroxyacyl-CoA dehydrogenase activity is His450. An NAD(+)-binding site is contributed by Asn453. Residues Asn500 and Tyr660 each contribute to the substrate site.

The protein in the N-terminal section; belongs to the enoyl-CoA hydratase/isomerase family. It in the C-terminal section; belongs to the 3-hydroxyacyl-CoA dehydrogenase family. In terms of assembly, heterotetramer of two alpha chains (FadB) and two beta chains (FadA).

It carries out the reaction a (3S)-3-hydroxyacyl-CoA + NAD(+) = a 3-oxoacyl-CoA + NADH + H(+). The enzyme catalyses a (3S)-3-hydroxyacyl-CoA = a (2E)-enoyl-CoA + H2O. It catalyses the reaction a 4-saturated-(3S)-3-hydroxyacyl-CoA = a (3E)-enoyl-CoA + H2O. The catalysed reaction is (3S)-3-hydroxybutanoyl-CoA = (3R)-3-hydroxybutanoyl-CoA. It carries out the reaction a (3Z)-enoyl-CoA = a 4-saturated (2E)-enoyl-CoA. The enzyme catalyses a (3E)-enoyl-CoA = a 4-saturated (2E)-enoyl-CoA. Its pathway is lipid metabolism; fatty acid beta-oxidation. Functionally, involved in the aerobic and anaerobic degradation of long-chain fatty acids via beta-oxidation cycle. Catalyzes the formation of 3-oxoacyl-CoA from enoyl-CoA via L-3-hydroxyacyl-CoA. It can also use D-3-hydroxyacyl-CoA and cis-3-enoyl-CoA as substrate. The polypeptide is Fatty acid oxidation complex subunit alpha (Photorhabdus laumondii subsp. laumondii (strain DSM 15139 / CIP 105565 / TT01) (Photorhabdus luminescens subsp. laumondii)).